The chain runs to 41 residues: Replication-associated protein (41 aa).

Functionally, involved in viral RNA replication. The protein is Replication-associated protein of Potato leafroll virus (strain Potato/Scotland/strain 1/1984) (PLrV).